Consider the following 434-residue polypeptide: Tol-Pal system protein TolB (434 aa).

Residues 1–21 (MIVRRALALAALALAASPALA) form the signal peptide. The interval 411 to 434 (GDRQTPVTSGKTDLAAPAWGPLAP) is disordered.

Belongs to the TolB family. In terms of assembly, the Tol-Pal system is composed of five core proteins: the inner membrane proteins TolA, TolQ and TolR, the periplasmic protein TolB and the outer membrane protein Pal. They form a network linking the inner and outer membranes and the peptidoglycan layer.

It is found in the periplasm. In terms of biological role, part of the Tol-Pal system, which plays a role in outer membrane invagination during cell division and is important for maintaining outer membrane integrity. The polypeptide is Tol-Pal system protein TolB (Anaeromyxobacter sp. (strain K)).